Consider the following 463-residue polypeptide: MFS-type transporter criB (463 aa).

Helical transmembrane passes span 5–27 (LVLS…SGIM), 46–66 (MVGT…LTAG), 83–103 (VFVV…MLLI), 106–126 (LVTG…QAEI), 141–161 (LMLA…SFVN), 168–188 (MPLA…YFLP), 256–276 (LFLG…VINY), 293–313 (IFLS…ALFF), 323–343 (LMMA…LTAA), 355–375 (VAMI…LSWV), and 402–422 (FYFL…FLYP).

Belongs to the major facilitator superfamily. Sugar transporter (TC 2.A.1.1) family.

It localises to the membrane. Functionally, MFS-type transporter; part of the gene cluster that mediates the biosynthesis of echinulin family alkaloid. This Aspergillus cristatus (Chinese Fuzhuan brick tea-fermentation fungus) protein is MFS-type transporter criB.